The following is a 68-amino-acid chain: Large ribosomal subunit protein bL31 (68 aa).

The Zn(2+) site is built by cysteine 16, cysteine 18, cysteine 36, and cysteine 39.

It belongs to the bacterial ribosomal protein bL31 family. Type A subfamily. As to quaternary structure, part of the 50S ribosomal subunit. Requires Zn(2+) as cofactor.

In terms of biological role, binds the 23S rRNA. The chain is Large ribosomal subunit protein bL31 from Dictyoglomus turgidum (strain DSM 6724 / Z-1310).